Here is a 391-residue protein sequence, read N- to C-terminus: 3-ketoacyl-CoA thiolase (391 aa).

C95 (acyl-thioester intermediate) is an active-site residue. Catalysis depends on proton acceptor residues H347 and C377.

The protein belongs to the thiolase-like superfamily. Thiolase family. Heterotetramer of two alpha chains (FadB) and two beta chains (FadA).

The protein resides in the cytoplasm. It catalyses the reaction an acyl-CoA + acetyl-CoA = a 3-oxoacyl-CoA + CoA. It participates in lipid metabolism; fatty acid beta-oxidation. In terms of biological role, catalyzes the final step of fatty acid oxidation in which acetyl-CoA is released and the CoA ester of a fatty acid two carbons shorter is formed. The chain is 3-ketoacyl-CoA thiolase from Pseudomonas putida (strain ATCC 700007 / DSM 6899 / JCM 31910 / BCRC 17059 / LMG 24140 / F1).